Here is a 21-residue protein sequence, read N- to C-terminus: Ocellatin-3 (21 aa).

Ile21 bears the Isoleucine amide mark.

As to expression, expressed by the skin dorsal glands.

It localises to the secreted. In terms of biological role, has hemolytic activity against human erythrocytes and antibacterial activity against the Gram-negative bacterium E.coli. This Leptodactylus ocellatus (Argus frog) protein is Ocellatin-3.